The primary structure comprises 159 residues: ATP synthase subunit b (159 aa).

Residues 2-22 (EFNLVTIGFTIVNFIILMLIL) traverse the membrane as a helical segment.

This sequence belongs to the ATPase B chain family. As to quaternary structure, F-type ATPases have 2 components, F(1) - the catalytic core - and F(0) - the membrane proton channel. F(1) has five subunits: alpha(3), beta(3), gamma(1), delta(1), epsilon(1). F(0) has three main subunits: a(1), b(2) and c(10-14). The alpha and beta chains form an alternating ring which encloses part of the gamma chain. F(1) is attached to F(0) by a central stalk formed by the gamma and epsilon chains, while a peripheral stalk is formed by the delta and b chains.

Its subcellular location is the cell membrane. F(1)F(0) ATP synthase produces ATP from ADP in the presence of a proton or sodium gradient. F-type ATPases consist of two structural domains, F(1) containing the extramembraneous catalytic core and F(0) containing the membrane proton channel, linked together by a central stalk and a peripheral stalk. During catalysis, ATP synthesis in the catalytic domain of F(1) is coupled via a rotary mechanism of the central stalk subunits to proton translocation. In terms of biological role, component of the F(0) channel, it forms part of the peripheral stalk, linking F(1) to F(0). This Clostridium acetobutylicum (strain ATCC 824 / DSM 792 / JCM 1419 / IAM 19013 / LMG 5710 / NBRC 13948 / NRRL B-527 / VKM B-1787 / 2291 / W) protein is ATP synthase subunit b.